The sequence spans 227 residues: Lipoprotein-releasing system ATP-binding protein LolD (227 aa).

The region spanning 8–226 (IEVTNLCKSF…VVHMADGRIT (219 aa)) is the ABC transporter domain. 44 to 51 (GASGAGKT) is a binding site for ATP.

It belongs to the ABC transporter superfamily. Lipoprotein translocase (TC 3.A.1.125) family. The complex is composed of two ATP-binding proteins (LolD) and two transmembrane proteins (LolC and LolE).

It localises to the cell inner membrane. Its function is as follows. Part of the ABC transporter complex LolCDE involved in the translocation of mature outer membrane-directed lipoproteins, from the inner membrane to the periplasmic chaperone, LolA. Responsible for the formation of the LolA-lipoprotein complex in an ATP-dependent manner. This is Lipoprotein-releasing system ATP-binding protein LolD from Syntrophotalea carbinolica (strain DSM 2380 / NBRC 103641 / GraBd1) (Pelobacter carbinolicus).